We begin with the raw amino-acid sequence, 310 residues long: tRNA-cytidine(32) 2-sulfurtransferase (310 aa).

The PP-loop motif signature appears at 45–50 (SGGKDS). [4Fe-4S] cluster contacts are provided by Cys-120, Cys-123, and Cys-211.

Belongs to the TtcA family. As to quaternary structure, homodimer. Mg(2+) serves as cofactor. [4Fe-4S] cluster is required as a cofactor.

Its subcellular location is the cytoplasm. The catalysed reaction is cytidine(32) in tRNA + S-sulfanyl-L-cysteinyl-[cysteine desulfurase] + AH2 + ATP = 2-thiocytidine(32) in tRNA + L-cysteinyl-[cysteine desulfurase] + A + AMP + diphosphate + H(+). It participates in tRNA modification. Its function is as follows. Catalyzes the ATP-dependent 2-thiolation of cytidine in position 32 of tRNA, to form 2-thiocytidine (s(2)C32). The sulfur atoms are provided by the cysteine/cysteine desulfurase (IscS) system. In Shewanella baltica (strain OS195), this protein is tRNA-cytidine(32) 2-sulfurtransferase.